The primary structure comprises 180 residues: Crossover junction endodeoxyribonuclease RuvC (180 aa).

Catalysis depends on residues Asp13, Glu73, and Asp145. 3 residues coordinate Mg(2+): Asp13, Glu73, and Asp145.

The protein belongs to the RuvC family. In terms of assembly, homodimer which binds Holliday junction (HJ) DNA. The HJ becomes 2-fold symmetrical on binding to RuvC with unstacked arms; it has a different conformation from HJ DNA in complex with RuvA. In the full resolvosome a probable DNA-RuvA(4)-RuvB(12)-RuvC(2) complex forms which resolves the HJ. Requires Mg(2+) as cofactor.

Its subcellular location is the cytoplasm. It carries out the reaction Endonucleolytic cleavage at a junction such as a reciprocal single-stranded crossover between two homologous DNA duplexes (Holliday junction).. Its function is as follows. The RuvA-RuvB-RuvC complex processes Holliday junction (HJ) DNA during genetic recombination and DNA repair. Endonuclease that resolves HJ intermediates. Cleaves cruciform DNA by making single-stranded nicks across the HJ at symmetrical positions within the homologous arms, yielding a 5'-phosphate and a 3'-hydroxyl group; requires a central core of homology in the junction. The consensus cleavage sequence is 5'-(A/T)TT(C/G)-3'. Cleavage occurs on the 3'-side of the TT dinucleotide at the point of strand exchange. HJ branch migration catalyzed by RuvA-RuvB allows RuvC to scan DNA until it finds its consensus sequence, where it cleaves and resolves the cruciform DNA. This Magnetococcus marinus (strain ATCC BAA-1437 / JCM 17883 / MC-1) protein is Crossover junction endodeoxyribonuclease RuvC.